The following is a 271-amino-acid chain: Endonuclease V (271 aa).

Residues 46-67 (TRTGDAPDVDQTTLSTSADDRT) form a disordered region. 2 residues coordinate Mg(2+): aspartate 76 and aspartate 140.

The protein belongs to the endonuclease V family. It depends on Mg(2+) as a cofactor.

It is found in the cytoplasm. The enzyme catalyses Endonucleolytic cleavage at apurinic or apyrimidinic sites to products with a 5'-phosphate.. Its function is as follows. DNA repair enzyme involved in the repair of deaminated bases. Selectively cleaves double-stranded DNA at the second phosphodiester bond 3' to a deoxyinosine leaving behind the intact lesion on the nicked DNA. The protein is Endonuclease V of Haloarcula marismortui (strain ATCC 43049 / DSM 3752 / JCM 8966 / VKM B-1809) (Halobacterium marismortui).